A 339-amino-acid chain; its full sequence is NADH-quinone oxidoreductase subunit H (339 aa).

A run of 8 helical transmembrane segments spans residues 9 to 29 (IFPLIIIALKVVAITIPLILC), 82 to 102 (ILFVLAPMITFILSLIGWAVI), 115 to 135 (VGVLYILAISSLSVYGIIIAG), 161 to 181 (MGLVIITVLLTTGTLNLSQIV), 187 to 207 (MPWWIDLMLMPMGVVFFISVL), 235 to 255 (MGFALFFLGEYANMILVSAMT), 275 to 295 (IPGFFWFVFKVGFLLFCFLWI), and 311 to 331 (GWKVFLPLTLFWVVLVSSVLI).

This sequence belongs to the complex I subunit 1 family. In terms of assembly, NDH-1 is composed of 14 different subunits. Subunits NuoA, H, J, K, L, M, N constitute the membrane sector of the complex.

It localises to the cell inner membrane. The enzyme catalyses a quinone + NADH + 5 H(+)(in) = a quinol + NAD(+) + 4 H(+)(out). Its function is as follows. NDH-1 shuttles electrons from NADH, via FMN and iron-sulfur (Fe-S) centers, to quinones in the respiratory chain. The immediate electron acceptor for the enzyme in this species is believed to be ubiquinone. Couples the redox reaction to proton translocation (for every two electrons transferred, four hydrogen ions are translocated across the cytoplasmic membrane), and thus conserves the redox energy in a proton gradient. This subunit may bind ubiquinone. This Rickettsia bellii (strain OSU 85-389) protein is NADH-quinone oxidoreductase subunit H.